Here is a 401-residue protein sequence, read N- to C-terminus: Pyruvyl transferase 1 (401 aa).

A signal peptide spans 1 to 30 (MFANINIRKSVWLFLLAAVSCTLFIYGVTR). Residues 38–64 (NPSSLTSPSSSTSVDKKKPLFTKSPRN) form a disordered region. Over residues 39-50 (PSSLTSPSSSTS) the composition is skewed to low complexity.

The protein belongs to the polysaccharide pyruvyl transferase family.

Its function is as follows. Involved in cell wall biogenesis. Has a role in the addition of Gal-beta1,3 moieties to galactomannans and their subsequent pyruvylation. The polypeptide is Pyruvyl transferase 1 (pvg1) (Schizosaccharomyces pombe (strain 972 / ATCC 24843) (Fission yeast)).